Consider the following 158-residue polypeptide: NAD(P)H-quinone oxidoreductase subunit J, chloroplastic (158 aa).

It belongs to the complex I 30 kDa subunit family. NDH is composed of at least 16 different subunits, 5 of which are encoded in the nucleus.

Its subcellular location is the plastid. It is found in the chloroplast thylakoid membrane. The enzyme catalyses a plastoquinone + NADH + (n+1) H(+)(in) = a plastoquinol + NAD(+) + n H(+)(out). It catalyses the reaction a plastoquinone + NADPH + (n+1) H(+)(in) = a plastoquinol + NADP(+) + n H(+)(out). Its function is as follows. NDH shuttles electrons from NAD(P)H:plastoquinone, via FMN and iron-sulfur (Fe-S) centers, to quinones in the photosynthetic chain and possibly in a chloroplast respiratory chain. The immediate electron acceptor for the enzyme in this species is believed to be plastoquinone. Couples the redox reaction to proton translocation, and thus conserves the redox energy in a proton gradient. The polypeptide is NAD(P)H-quinone oxidoreductase subunit J, chloroplastic (Solanum lycopersicum (Tomato)).